Consider the following 200-residue polypeptide: Recombination protein RecR (200 aa).

Residues 57 to 72 (CRQCRTLTEEELCPQC) form a C4-type zinc finger. Residues 80 to 175 (TLLCVVEGPM…ITSRIAHGVP (96 aa)) enclose the Toprim domain.

Belongs to the RecR family.

Its function is as follows. May play a role in DNA repair. It seems to be involved in an RecBC-independent recombinational process of DNA repair. It may act with RecF and RecO. This Pseudomonas fluorescens (strain SBW25) protein is Recombination protein RecR.